Consider the following 324-residue polypeptide: Lipoyl synthase (324 aa).

Positions 71, 76, 82, 97, 101, 104, and 311 each coordinate [4Fe-4S] cluster. Residues 83–300 (FGHGTATFLI…GDKAREMGFT (218 aa)) enclose the Radical SAM core domain.

The protein belongs to the radical SAM superfamily. Lipoyl synthase family. The cofactor is [4Fe-4S] cluster.

It localises to the cytoplasm. It carries out the reaction [[Fe-S] cluster scaffold protein carrying a second [4Fe-4S](2+) cluster] + N(6)-octanoyl-L-lysyl-[protein] + 2 oxidized [2Fe-2S]-[ferredoxin] + 2 S-adenosyl-L-methionine + 4 H(+) = [[Fe-S] cluster scaffold protein] + N(6)-[(R)-dihydrolipoyl]-L-lysyl-[protein] + 4 Fe(3+) + 2 hydrogen sulfide + 2 5'-deoxyadenosine + 2 L-methionine + 2 reduced [2Fe-2S]-[ferredoxin]. Its pathway is protein modification; protein lipoylation via endogenous pathway; protein N(6)-(lipoyl)lysine from octanoyl-[acyl-carrier-protein]: step 2/2. Catalyzes the radical-mediated insertion of two sulfur atoms into the C-6 and C-8 positions of the octanoyl moiety bound to the lipoyl domains of lipoate-dependent enzymes, thereby converting the octanoylated domains into lipoylated derivatives. The protein is Lipoyl synthase of Nitrosococcus oceani (strain ATCC 19707 / BCRC 17464 / JCM 30415 / NCIMB 11848 / C-107).